A 600-amino-acid chain; its full sequence is Elongation factor 4 (600 aa).

In terms of domain architecture, tr-type G spans 5–187; it reads SRIRNFSIIA…DLIKKIPPPK (183 aa). Residues 17–22 and 134–137 contribute to the GTP site; these read DHGKST and NKMD.

This sequence belongs to the TRAFAC class translation factor GTPase superfamily. Classic translation factor GTPase family. LepA subfamily.

The protein localises to the cell inner membrane. It carries out the reaction GTP + H2O = GDP + phosphate + H(+). In terms of biological role, required for accurate and efficient protein synthesis under certain stress conditions. May act as a fidelity factor of the translation reaction, by catalyzing a one-codon backward translocation of tRNAs on improperly translocated ribosomes. Back-translocation proceeds from a post-translocation (POST) complex to a pre-translocation (PRE) complex, thus giving elongation factor G a second chance to translocate the tRNAs correctly. Binds to ribosomes in a GTP-dependent manner. The chain is Elongation factor 4 from Marinobacter nauticus (strain ATCC 700491 / DSM 11845 / VT8) (Marinobacter aquaeolei).